Consider the following 141-residue polypeptide: Hemoglobin subunit alpha (141 aa).

The Globin domain maps to Val-1–Arg-141. Ser-3 carries the post-translational modification Phosphoserine. The residue at position 7 (Lys-7) is an N6-succinyllysine. Thr-8 carries the post-translational modification Phosphothreonine. The residue at position 11 (Lys-11) is an N6-succinyllysine. Lys-16 is subject to N6-acetyllysine; alternate. Position 16 is an N6-succinyllysine; alternate (Lys-16). Tyr-24 is subject to Phosphotyrosine. At Lys-40 the chain carries N6-succinyllysine. Ser-49 is modified (phosphoserine). His-58 contributes to the O2 binding site. His-87 is a heme b binding site. At Ser-102 the chain carries Phosphoserine. Thr-108 carries the phosphothreonine modification. The residue at position 124 (Ser-124) is a Phosphoserine. Residues Thr-134 and Thr-137 each carry the phosphothreonine modification. Ser-138 carries the post-translational modification Phosphoserine.

It belongs to the globin family. Heterotetramer of two alpha chains and two beta chains. Red blood cells.

Its function is as follows. Involved in oxygen transport from the lung to the various peripheral tissues. This Tamias striatus (Eastern chipmunk) protein is Hemoglobin subunit alpha.